Consider the following 693-residue polypeptide: Protein-glutamine gamma-glutamyltransferase E (693 aa).

The residue at position 2 (Ala2) is an N-acetylalanine. Position 111 is a phosphotyrosine (Tyr111). Residue Thr112 is modified to Phosphothreonine. Positions 222, 225, 227, 228, and 230 each coordinate Ca(2+). Cys273 is an active-site residue. The Ca(2+) site is built by Asp302, Asp304, Asn306, Ser308, and Asp325. Active-site residues include His331 and Asp354. Residues Asn394, Ser416, Glu444, and Glu449 each contribute to the Ca(2+) site.

Belongs to the transglutaminase superfamily. Transglutaminase family. Consists of two polypeptide chains, which are synthesized as a precursor form of a single polypeptide. Ca(2+) is required as a cofactor. In terms of processing, activated by proteolytic processing. In vitro activation is commonly achieved by cleavage with dispase, a neutral bacterial protease. Dispase cleavage site was proposed to lie between Ser-470 and Ser-471 or between Pro-465 and Phe-466. Physiological activation may be catalyzed by CTSL and, to a lesser extent, by CTSS, but not by CTSB, CTSD nor CTSV.

It is found in the cytoplasm. The enzyme catalyses L-glutaminyl-[protein] + L-lysyl-[protein] = [protein]-L-lysyl-N(6)-5-L-glutamyl-[protein] + NH4(+). Catalyzes the calcium-dependent formation of isopeptide cross-links between glutamine and lysine residues in various proteins, as well as the conjugation of polyamines to proteins. Involved in the formation of the cornified envelope (CE), a specialized component consisting of covalent cross-links of proteins beneath the plasma membrane of terminally differentiated keratinocytes. Catalyzes small proline-rich proteins (SPRR1 and SPRR2) and LOR cross-linking to form small interchain oligomers, which are further cross-linked by TGM1 onto the growing CE scaffold. In hair follicles, involved in cross-linking structural proteins to hardening the inner root sheath. The polypeptide is Protein-glutamine gamma-glutamyltransferase E (TGM3) (Homo sapiens (Human)).